The chain runs to 104 residues: MIPGEVVCAEGVIELNEGSPRTELEVVNTGDRPVQVGSHVHFPQSNHALQFDRSAAHGLRLDIPAGTAVRFEPGIAQTISLVPLRGTREVHGLSLTPPGKLDAS.

This sequence belongs to the urease beta subunit family. As to quaternary structure, heterotrimer of UreA (gamma), UreB (beta) and UreC (alpha) subunits. Three heterotrimers associate to form the active enzyme.

It localises to the cytoplasm. The enzyme catalyses urea + 2 H2O + H(+) = hydrogencarbonate + 2 NH4(+). The protein operates within nitrogen metabolism; urea degradation; CO(2) and NH(3) from urea (urease route): step 1/1. This Rhodococcus jostii (strain RHA1) protein is Urease subunit beta.